A 938-amino-acid chain; its full sequence is AP-2 complex subunit alpha-2 (938 aa).

A 1,2-diacyl-sn-glycero-3-phospho-(1D-myo-inositol-3,4,5-trisphosphate) contacts are provided by residues 11–12, K43, Y53, and 57–61; these read RG and KYVCK. Residues 616–677 form a disordered region; that stretch reads LKKKKGPSTV…APPVPAGPPP (62 aa). The span at 645 to 668 shows a compositional bias: low complexity; the sequence is PALASTSAVSTPSPSADLLGLGAA.

It belongs to the adaptor complexes large subunit family. As to quaternary structure, adaptor protein complex 2 (AP-2) is a heterotetramer composed of two large adaptins (alpha-type subunit AP2A1 or AP2A2 and beta-type subunit AP2B1), a medium adaptin (mu-type subunit AP2M1) and a small adaptin (sigma-type subunit AP2S1). Binds clathrin. Binds EPN1, EPS15, AMPH, SNAP91 and BIN1. Interacts with HIP1. Interacts with DGKD. Interacts with DENND1A, DENND1B and DENND1C. Interacts with FCHO1. Interacts with ATAT1; this interaction is required for efficient alpha-tubulin acetylation by ATAT1. Interacts with KIAA1107. Together with AP2B1 and AP2M1, it interacts with ADAM10; this interaction facilitates ADAM10 endocytosis from the plasma membrane during long-term potentiation in hippocampal neurons. Interacts with CLN3 (via dileucine motif). Interacts with ABCB11; this interaction regulates cell membrane expression of ABCB11 through its internalization in a clathrin-dependent manner and its subsequent degradation. Interacts with DNAJC6.

It is found in the cell membrane. The protein resides in the membrane. It localises to the coated pit. Component of the adaptor protein complex 2 (AP-2). Adaptor protein complexes function in protein transport via transport vesicles in different membrane traffic pathways. Adaptor protein complexes are vesicle coat components and appear to be involved in cargo selection and vesicle formation. AP-2 is involved in clathrin-dependent endocytosis in which cargo proteins are incorporated into vesicles surrounded by clathrin (clathrin-coated vesicles, CCVs) which are destined for fusion with the early endosome. The clathrin lattice serves as a mechanical scaffold but is itself unable to bind directly to membrane components. Clathrin-associated adaptor protein (AP) complexes which can bind directly to both the clathrin lattice and to the lipid and protein components of membranes are considered to be the major clathrin adaptors contributing the CCV formation. AP-2 also serves as a cargo receptor to selectively sort the membrane proteins involved in receptor-mediated endocytosis. AP-2 seems to play a role in the recycling of synaptic vesicle membranes from the presynaptic surface. AP-2 recognizes Y-X-X-[FILMV] (Y-X-X-Phi) and [ED]-X-X-X-L-[LI] endocytosis signal motifs within the cytosolic tails of transmembrane cargo molecules. AP-2 may also play a role in maintaining normal post-endocytic trafficking through the ARF6-regulated, non-clathrin pathway. During long-term potentiation in hippocampal neurons, AP-2 is responsible for the endocytosis of ADAM10. The AP-2 alpha subunit binds polyphosphoinositide-containing lipids, positioning AP-2 on the membrane. The AP-2 alpha subunit acts via its C-terminal appendage domain as a scaffolding platform for endocytic accessory proteins. The AP-2 alpha and AP-2 sigma subunits are thought to contribute to the recognition of the [ED]-X-X-X-L-[LI] motif. The protein is AP-2 complex subunit alpha-2 of Bos taurus (Bovine).